A 199-amino-acid polypeptide reads, in one-letter code: Small ribosomal subunit protein uS5 (199 aa).

Positions 1 to 29 (MATAGRRGGAASERRERRESRRQEASPEK) are disordered. Residues 12–27 (SERRERRESRRQEASP) show a composition bias toward basic and acidic residues. Residues 32–95 (FLERVVTINR…EEAKKHFFTV (64 aa)) form the S5 DRBM domain.

It belongs to the universal ribosomal protein uS5 family. Part of the 30S ribosomal subunit. Contacts proteins S4 and S8.

In terms of biological role, with S4 and S12 plays an important role in translational accuracy. Located at the back of the 30S subunit body where it stabilizes the conformation of the head with respect to the body. This chain is Small ribosomal subunit protein uS5, found in Acidothermus cellulolyticus (strain ATCC 43068 / DSM 8971 / 11B).